Consider the following 113-residue polypeptide: Colipase (113 aa).

A signal peptide spans 1 to 18 (MEKVLVLLLVSLLAVAYA). Residues 19 to 23 (APGPR) constitute a propeptide, enterostatin, activation peptide. Cystine bridges form between Cys35/Cys46, Cys41/Cys57, Cys45/Cys79, Cys67/Cys87, and Cys81/Cys105.

This sequence belongs to the colipase family. In terms of assembly, forms a 1:1 stoichiometric complex with pancreatic lipase. As to expression, expressed by the pancreas.

It localises to the secreted. Functionally, colipase is a cofactor of pancreatic lipase. It allows the lipase to anchor itself to the lipid-water interface. Without colipase the enzyme is washed off by bile salts, which have an inhibitory effect on the lipase. Its function is as follows. Enterostatin has a biological activity as a satiety signal. This chain is Colipase, found in Mus musculus (Mouse).